The primary structure comprises 348 residues: Rhodopsin (348 aa).

The residue at position 1 (Met1) is an N-acetylmethionine. Over 1–36 (MNGTEGPNFYVPYSNKSGVVRSPYEEPQYYLAEPWM) the chain is Extracellular. 2 N-linked (GlcNAc...) asparagine glycosylation sites follow: Asn2 and Asn15. The helical transmembrane segment at 37 to 61 (FSCLAAYMFMLIVLGFPINFLTLYV) threads the bilayer. The Cytoplasmic segment spans residues 62–73 (TIQHKKLRTPLN). Residues 74–96 (YILLNLAVADLFMVICGFTTTLV) traverse the membrane as a helical segment. Topologically, residues 97–110 (TSLNGYFVFGTTGC) are extracellular. Cys110 and Cys187 are oxidised to a cystine. The chain crosses the membrane as a helical span at residues 111–133 (LVEGFFATTGGEVALWALVVLAI). The 'Ionic lock' involved in activated form stabilization signature appears at 134 to 136 (ERY). Topologically, residues 134–152 (ERYIVVCKPMSNFRFGENH) are cytoplasmic. The helical transmembrane segment at 153–173 (AIMGVAFTWIMALACSVPPIF) threads the bilayer. The Extracellular portion of the chain corresponds to 174-202 (GWSRYIPEGMQCSCGIDYYTLNPEFNNES). Glu201 is a binding site for Zn(2+). A helical transmembrane segment spans residues 203–224 (FVIYMFVVHFIIPLTVIFFCYG). Over 225–252 (QLVFTVKEAAAQQQESATTQKAEKEVTR) the chain is Cytoplasmic. Residues 253–274 (MVIIMVIAFLICWVPYASVAFY) form a helical membrane-spanning segment. The Extracellular segment spans residues 275 to 286 (IFTHQGSDFGPI). Residue Gln279 coordinates Zn(2+). Residues 287–308 (FMTLPAFFAKSSSIYNPVIYIM) traverse the membrane as a helical segment. Lys296 bears the N6-(retinylidene)lysine mark. At 309–348 (MNKQFRNCMITTLCCGKNPLGDDEASTTASKTETSQVAPA) the chain is on the cytoplasmic side. Residues Cys322 and Cys323 are each lipidated (S-palmitoyl cysteine). The interval 330-348 (DDEASTTASKTETSQVAPA) is interaction with SAG. Ser334 is modified (phosphoserine). Phosphothreonine is present on residues Thr335 and Thr336. Ser338 is modified (phosphoserine). Phosphothreonine is present on residues Thr340 and Thr342. Ser343 carries the phosphoserine modification.

The protein belongs to the G-protein coupled receptor 1 family. Opsin subfamily. As to quaternary structure, homodimer. May form a complex composed of RHO, GRK1 and RCVRN in a Ca(2+)-dependent manner; RCVRN prevents the interaction between GRK1 and RHO. Interacts with GRK1. Interacts (phosphorylated form) with SAG. Interacts with GNAT1. Interacts with GNAT3. SAG and G-proteins compete for a common binding site. Interacts with PRCD; the interaction promotes PRCD stability. Forms a complex with ASAP1 and ARF4. Forms a complex with ASAP1, RAB11A, Rabin8/RAB3IP, ARF4 and RAB11FIP3; the complex regulates Golgi-to-cilia rhodopsin/RHO transport in photoreceptors. In terms of processing, phosphorylated on some or all of the serine and threonine residues present in the C-terminal region. Contains one covalently linked retinal chromophore. Upon light absorption, the covalently bound 11-cis-retinal is converted to all-trans-retinal. After hydrolysis of the Schiff base and release of the covalently bound all-trans-retinal, active rhodopsin is regenerated by binding of a fresh molecule of 11-cis-retinal.

It localises to the membrane. The protein resides in the cell projection. Its subcellular location is the cilium. The protein localises to the photoreceptor outer segment. Its function is as follows. Photoreceptor required for image-forming vision at low light intensity. Required for photoreceptor cell viability after birth. Light-induced isomerization of 11-cis to all-trans retinal triggers a conformational change that activates signaling via G-proteins. Subsequent receptor phosphorylation mediates displacement of the bound G-protein alpha subunit by the arrestin SAG and terminates signaling. The chain is Rhodopsin (RHO) from Sminthopsis crassicaudata (Fat-tailed dunnart).